The sequence spans 186 residues: Threonylcarbamoyl-AMP synthase (186 aa).

The YrdC-like domain occupies 1-186 (MADTWEAAHS…LNNQVFRDDA (186 aa)).

Belongs to the SUA5 family. TsaC subfamily.

It is found in the cytoplasm. The catalysed reaction is L-threonine + hydrogencarbonate + ATP = L-threonylcarbamoyladenylate + diphosphate + H2O. Functionally, required for the formation of a threonylcarbamoyl group on adenosine at position 37 (t(6)A37) in tRNAs that read codons beginning with adenine. Catalyzes the conversion of L-threonine, HCO(3)(-)/CO(2) and ATP to give threonylcarbamoyl-AMP (TC-AMP) as the acyladenylate intermediate, with the release of diphosphate. The chain is Threonylcarbamoyl-AMP synthase from Idiomarina loihiensis (strain ATCC BAA-735 / DSM 15497 / L2-TR).